The chain runs to 395 residues: Aurora kinase A (395 aa).

The tract at residues 1-114 (MDRCKENCVS…QASLQKTEDT (114 aa)) is disordered. Polar residues-rich tracts occupy residues 29–60 (QIPS…SQAQ) and 84–99 (RLNN…ASGN). S40 and S50 each carry phosphoserine. A compositionally biased stretch (basic and acidic residues) spans 100-114 (DSEKEQASLQKTEDT). Positions 124–374 (FDIGRPLGKG…LAEVLEHPWI (251 aa)) constitute a Protein kinase domain. ATP contacts are provided by residues K134, K153, and 201-204 (LEYA). Residue D247 is the Proton acceptor of the active site. A Glycyl lysine isopeptide (Lys-Gly) (interchain with G-Cter in SUMO2) cross-link involves residue K249. ATP is bound by residues 251 to 252 (EN) and D265. Residues 271–284 (HAPSSRRTTMCGTL) are activation segment. Phosphothreonine is present on residues T278 and T279. S333 bears the Phosphoserine; by PKA and PAK mark. Residues 376-385 (ANSSKPPTGH) show a composition bias toward polar residues. A disordered region spans residues 376–395 (ANSSKPPTGHTSKEPTSKSS). Positions 386–395 (TSKEPTSKSS) are enriched in basic and acidic residues.

It belongs to the protein kinase superfamily. Ser/Thr protein kinase family. Aurora subfamily. Part of a complex composed of NEDD9, AURKA and CTTN; within the complex NEDD9 acts as a scaffold protein and is required for complex formation. Identified in a complex with AUNIP and NIN. Interacts with CPEB1, JTB, TACC1, TPX2, PPP2CA, as well as with the protein phosphatase type 1 (PP1) isoforms PPP1CA, PPP1CB and PPP1CC. Also interacts with its substrates ARHGEF2, BORA, KIF2A, PARD3, and p53/TP53. Interaction with BORA promotes phosphorylation of PLK1. Interacts with GADD45A, competing with its oligomerization. Interacts with FBXL7 and CIMAP3. Interacts (via C-terminus) with AUNIP (via C-terminus). Interacts with SIRT2. Interacts with FRY; this interaction facilitates AURKA-mediated PLK1 phosphorylation. Interacts with MYCN; interaction is phospho-independent and triggers AURKA activation; AURKA competes with FBXW7 for binding to unphosphorylated MYCN but not for binding to phosphorylated MYCN. Interacts with HNRNPU. Interacts with AAAS. Interacts with KLHL18 and CUL3. Interacts with FOXP1. Interacts with HDAC6; AURKA-mediated phosphorylation of HDAC6 promotes deacetylation of alpha-tubulin. Post-translationally, activated by phosphorylation at Thr-279; this brings about a change in the conformation of the activation segment. Phosphorylation at Thr-279 varies during the cell cycle and is highest during M phase. Autophosphorylated at Thr-279 upon TPX2 binding. Thr-279 can be phosphorylated by several kinases, including PAK and PKA. Protein phosphatase type 1 (PP1) binds AURKA and inhibits its activity by dephosphorylating Thr-279 during mitosis. Phosphorylation at Ser-333 decreases the kinase activity. PPP2CA controls degradation by dephosphorylating Ser-52 at the end of mitosis. In terms of processing, ubiquitinated by the anaphase-promoting complex (APC), leading to its degradation by the proteasome. Ubiquitinated by CHFR, leading to its degradation by the proteasome. Ubiquitinated by the E3 ubiquitin-protein ligase complex SCF(FBXL7) during mitosis, leading to its degradation by the proteasome. In terms of tissue distribution, detected in embryonic neurons in dorsal root ganglia and brain cortex (at protein level). Highly expressed in testis, in about one third of the seminiferous tubules. Expression is restricted to specific spermatocytes nearing completion of prophase, with levels falling off on transition to elongated spermatids. Highly expressed in the ovary, expression in the oocyte starts around the transition to large growing follicle. Abundant expression is seen in the proliferating granulosa and thecal cells of the growing follicle, and in the young corpus luteum. Very weakly expressed in spleen and intestine.

The protein resides in the cytoplasm. Its subcellular location is the cytoskeleton. It is found in the microtubule organizing center. It localises to the centrosome. The protein localises to the spindle pole. The protein resides in the centriole. Its subcellular location is the cell projection. It is found in the neuron projection. It localises to the cilium. The protein localises to the cilium basal body. The protein resides in the basolateral cell membrane. It catalyses the reaction L-seryl-[protein] + ATP = O-phospho-L-seryl-[protein] + ADP + H(+). The enzyme catalyses L-threonyl-[protein] + ATP = O-phospho-L-threonyl-[protein] + ADP + H(+). Activation of CDK1, appears to be an upstream event of AURKA activation. Phosphatase inhibitor-2 (PPP1R2) and TPX2 act also as activators. Inactivated by the G2 checkpoint. Inhibited by GADD45A and p53/TP53, and through dephosphorylation by protein phosphatase type 1 (PP1). MLN8054 is also a potent and selective inhibitor. Activated during the early phase of cilia disassembly in the presence of CIMAP3. Inhibited by the small molecule inhibitor VX-680. Functionally, mitotic serine/threonine kinase that contributes to the regulation of cell cycle progression. Associates with the centrosome and the spindle microtubules during mitosis and plays a critical role in various mitotic events including the establishment of mitotic spindle, centrosome duplication, centrosome separation as well as maturation, chromosomal alignment, spindle assembly checkpoint, and cytokinesis. Required for normal spindle positioning during mitosis and for the localization of NUMA1 and DCTN1 to the cell cortex during metaphase. Required for initial activation of CDK1 at centrosomes. Phosphorylates numerous target proteins, including ARHGEF2, BORA, BRCA1, CDC25B, DLGP5, HDAC6, KIF2A, LATS2, NDEL1, PARD3, PPP1R2, PLK1, RASSF1, TACC3, p53/TP53 and TPX2. Phosphorylates MCRS1 which is required for MCRS1-mediated kinetochore fiber assembly and mitotic progression. Regulates KIF2A tubulin depolymerase activity. Required for normal axon formation. Plays a role in microtubule remodeling during neurite extension. Important for microtubule formation and/or stabilization. Also acts as a key regulatory component of the p53/TP53 pathway, and particularly the checkpoint-response pathways critical for oncogenic transformation of cells, by phosphorylating and destabilizing p53/TP53. Phosphorylates its own inhibitors, the protein phosphatase type 1 (PP1) isoforms, to inhibit their activity. Inhibits cilia outgrowth. Required for cilia disassembly via phosphorylation of HDAC6 and subsequent deacetylation of alpha-tubulin. Regulates protein levels of the anti-apoptosis protein BIRC5 by suppressing the expression of the SCF(FBXL7) E3 ubiquitin-protein ligase substrate adapter FBXL7 through the phosphorylation of the transcription factor FOXP1. This chain is Aurora kinase A (Aurka), found in Mus musculus (Mouse).